The sequence spans 912 residues: Protein translocase subunit SecA (912 aa).

Residues Gln-87, 105–109 (GEGKT), and Asp-508 each bind ATP. The tract at residues 864 to 912 (AEEEVEQMQGGNAPVPVSQVTRDEPKVGRNDPCPCGSGKKYKHCHGQLS) is disordered. The Zn(2+) site is built by Cys-896, Cys-898, Cys-907, and His-908. The span at 902-912 (KKYKHCHGQLS) shows a compositional bias: basic residues.

Belongs to the SecA family. As to quaternary structure, monomer and homodimer. Part of the essential Sec protein translocation apparatus which comprises SecA, SecYEG and auxiliary proteins SecDF-YajC and YidC. It depends on Zn(2+) as a cofactor.

It localises to the cell inner membrane. Its subcellular location is the cytoplasm. The catalysed reaction is ATP + H2O + cellular proteinSide 1 = ADP + phosphate + cellular proteinSide 2.. In terms of biological role, part of the Sec protein translocase complex. Interacts with the SecYEG preprotein conducting channel. Has a central role in coupling the hydrolysis of ATP to the transfer of proteins into and across the cell membrane, serving both as a receptor for the preprotein-SecB complex and as an ATP-driven molecular motor driving the stepwise translocation of polypeptide chains across the membrane. In Xanthomonas euvesicatoria pv. vesicatoria (strain 85-10) (Xanthomonas campestris pv. vesicatoria), this protein is Protein translocase subunit SecA.